The following is a 387-amino-acid chain: Cysteine desulfurase IscS (387 aa).

Residues 73-74 (AT), Asn155, Gln183, and 203-205 (SAH) contribute to the pyridoxal 5'-phosphate site. At Lys206 the chain carries N6-(pyridoxal phosphate)lysine. Pyridoxal 5'-phosphate is bound at residue Thr241. The Cysteine persulfide intermediate role is filled by Cys328. Cys328 serves as a coordination point for [2Fe-2S] cluster.

It belongs to the class-V pyridoxal-phosphate-dependent aminotransferase family. NifS/IscS subfamily. As to quaternary structure, homodimer. Forms a heterotetramer with IscU, interacts with other sulfur acceptors. Pyridoxal 5'-phosphate is required as a cofactor.

Its subcellular location is the cytoplasm. It catalyses the reaction (sulfur carrier)-H + L-cysteine = (sulfur carrier)-SH + L-alanine. The protein operates within cofactor biosynthesis; iron-sulfur cluster biosynthesis. Its function is as follows. Master enzyme that delivers sulfur to a number of partners involved in Fe-S cluster assembly, tRNA modification or cofactor biosynthesis. Catalyzes the removal of elemental sulfur atoms from cysteine to produce alanine. Functions as a sulfur delivery protein for Fe-S cluster synthesis onto IscU, an Fe-S scaffold assembly protein, as well as other S acceptor proteins. This chain is Cysteine desulfurase IscS, found in Helicobacter pylori (strain P12).